We begin with the raw amino-acid sequence, 78 residues long: MSRLITLQDWAKEEFGDLAPSERVLKKYAQGKMMAPPAIKVGRYWMIDRNSRFVGTLAEPQLPINANPKLQRIIADGC.

Excisionase and integrase are necessary for the excision of prophage from the host genome by site-specific recombination at the att site. The sequence is that of Excisionase (xis) from Enterobacteria phage P21 (Bacteriophage 21).